The following is a 545-amino-acid chain: Monocarboxylate transporter 8 (545 aa).

Residues 1 to 98 (MALPSPASEE…VETRGTARGF (98 aa)) are disordered. Alanine 2 bears the N-acetylalanine mark. Residues 2–102 (ALPSPASEEA…GTARGFQPPE (101 aa)) lie on the Cytoplasmic side of the membrane. A run of 2 repeats spans residues 29–50 (PVPE…PVPV) and 51–72 (PPPE…PLPE). The segment at 29 to 72 (PVPEPEPEPEPEPEPDPEPVPVPPPEPQPEPEPQPLPDPAPLPE) is 2 X 22 AA approximate tandem repeats. Residues 33–45 (PEPEPEPEPEPDP) are compositionally biased toward acidic residues. The segment covering 46 to 70 (EPVPVPPPEPQPEPEPQPLPDPAPL) has biased composition (pro residues). The helical transmembrane segment at 103–123 (GGFGWIVVFAATWCNGSIFGI) threads the bilayer. Topologically, residues 124–149 (HNSVGILYSMLLEEEKEKNRQVEFQA) are extracellular. A helical membrane pass occupies residues 150–170 (AWVGALAMGMIFFCSPIVSIF). Residues 171–177 (TDRLGCR) are Cytoplasmic-facing. A helical membrane pass occupies residues 178-198 (ITATTGAAVAFIGLHTSSFTS). The Extracellular portion of the chain corresponds to 199 to 206 (SLSLRYFT). Residues 207–227 (YGILFGCGCSFAFQPSLVILG) traverse the membrane as a helical segment. At 228 to 235 (HYFQRRLG) the chain is on the cytoplasmic side. A helical membrane pass occupies residues 236–256 (LANGVVSAGSSIFSMSFPFLI). Residues 257 to 264 (KMLGDKIK) are Extracellular-facing. Residues 265–285 (LAQTFQVLSTFMFVLTLLSLT) form a helical membrane-spanning segment. Residues 286–328 (YRPLLPSSQDTPSKRGAHTLRQRFLVQFRKYFNMRVFRQRTYR) are Cytoplasmic-facing. Residues 329–349 (IWAFGIAAAALGYFVPYVHLM) traverse the membrane as a helical segment. Over 350-362 (KYVEDKFKEIKET) the chain is Extracellular. Residues 363 to 383 (WVLLVCIGATSGLGRLVSGHI) form a helical membrane-spanning segment. Residues 384-392 (SDSIPGLKK) are Cytoplasmic-facing. A helical membrane pass occupies residues 393 to 413 (IYLQVLSFLLLGLMSMMIPLC). The Extracellular portion of the chain corresponds to 414–415 (RD). A helical transmembrane segment spans residues 416 to 436 (FGGLIVVCLFLGLCDGFFITI). Topologically, residues 437–453 (MAPIAFELVGPMQASQA) are cytoplasmic. The chain crosses the membrane as a helical span at residues 454–474 (IGYLLGMMALPMIAGPPIAGL). The Extracellular portion of the chain corresponds to 475–483 (LRNCFGDYH). The helical transmembrane segment at 484–504 (VAFYFAGVPPIIGAVILFFVP) threads the bilayer. At 505 to 545 (LMHQRMFKKEQRDSSKDKMLSHDPDPNGELLPGSPTPEEPI) the chain is on the cytoplasmic side. Residues 514 to 529 (EQRDSSKDKMLSHDPD) show a composition bias toward basic and acidic residues. The disordered stretch occupies residues 514-545 (EQRDSSKDKMLSHDPDPNGELLPGSPTPEEPI). Threonine 540 bears the Phosphothreonine mark.

Belongs to the major facilitator superfamily. Monocarboxylate porter (TC 2.A.1.13) family. As to quaternary structure, monomer. Homodimer. Homooligomer. Expressed in cerebral microvessels.

The protein localises to the cell membrane. It is found in the apical cell membrane. The enzyme catalyses 3,3',5-triiodo-L-thyronine(out) = 3,3',5-triiodo-L-thyronine(in). The catalysed reaction is 3,3',5'-triiodo-L-thyronine(out) = 3,3',5'-triiodo-L-thyronine(in). It carries out the reaction L-thyroxine(out) = L-thyroxine(in). It catalyses the reaction 3,3'-diiodo-L-thyronine(out) = 3,3'-diiodo-L-thyronine(in). In terms of biological role, specific thyroid hormone transmembrane transporter, that mediates both uptake and efflux of thyroid hormones across the cell membrane independently of pH or a Na(+) gradient. Major substrates are the iodothyronines T3 and T4 and to a lesser extent rT3 and 3,3-diiodothyronine (3,3'-T2). Acts as an important mediator of thyroid hormone transport, especially T3, through the blood-brain barrier. In Mus musculus (Mouse), this protein is Monocarboxylate transporter 8 (Slc16a2).